The following is a 214-amino-acid chain: Adenylate kinase (214 aa).

10 to 15 serves as a coordination point for ATP; sequence GAGKGT. Residues 30–59 form an NMP region; sequence STGDMFRAAVKNETPLGLEAKSYMDKGHLV. AMP-binding positions include T31, R36, 57–59, 85–88, and Q92; these read HLV and GFPR. Positions 126-163 are LID; that stretch reads GRWICPVCGASYHTMFNPPKEAGVCDKDGGKLYQREDD. R127 contacts ATP. Zn(2+) is bound by residues C130 and C133. 136–137 provides a ligand contact to ATP; that stretch reads SY. Residues C150 and D153 each contribute to the Zn(2+) site. R160 and R171 together coordinate AMP. Q199 is a binding site for ATP.

The protein belongs to the adenylate kinase family. As to quaternary structure, monomer.

The protein resides in the cytoplasm. It carries out the reaction AMP + ATP = 2 ADP. The protein operates within purine metabolism; AMP biosynthesis via salvage pathway; AMP from ADP: step 1/1. In terms of biological role, catalyzes the reversible transfer of the terminal phosphate group between ATP and AMP. Plays an important role in cellular energy homeostasis and in adenine nucleotide metabolism. The chain is Adenylate kinase from Brevibacillus brevis (strain 47 / JCM 6285 / NBRC 100599).